We begin with the raw amino-acid sequence, 261 residues long: uncharacterized protein (261 aa).

The next 2 membrane-spanning stretches (helical) occupy residues 4–21 and 33–55; these read RLIA…LIVL and FSIL…LVLF.

Its subcellular location is the cell membrane. This is an uncharacterized protein from Archaeoglobus fulgidus (strain ATCC 49558 / DSM 4304 / JCM 9628 / NBRC 100126 / VC-16).